Reading from the N-terminus, the 478-residue chain is Solute carrier family 7 member 13 (478 aa).

The Cytoplasmic segment spans residues 1 to 14; it reads MAMDSKKEIRLKRE. A helical membrane pass occupies residues 15 to 35; the sequence is LGYFWGTNFLIINIIGAGIFV. Over 36-47 the chain is Extracellular; the sequence is SPKGVLQHSSMN. A helical transmembrane segment spans residues 48–68; the sequence is VGVSLCVWAVCAVLTLTSALC. At 69-89 the chain is on the cytoplasmic side; that stretch reads SAEIGITFPYSGAHYYFLKRC. Residues 90–110 form a helical membrane-spanning segment; the sequence is FGPLVAFLRLWTSLFLGPGLI. Over 111–129 the chain is Extracellular; it reads ASQALLLAEYGVQPFYPSC. The helical transmembrane segment at 130-150 threads the bilayer; sequence SAPILPRKCLALAMLWIVGIL. Topologically, residues 151–163 are cytoplasmic; sequence NSRGVKELSWLQT. Residues 164-184 traverse the membrane as a helical segment; sequence VSSVLKVGILGVISLSGLFLL. At 185–208 the chain is on the extracellular side; the sequence is VRGKKENVQRLQNAFDAEFPEVSQ. The helical transmembrane segment at 209–229 threads the bilayer; the sequence is LIEAIFQGYFAFSGGGCFTCI. At 230–242 the chain is on the cytoplasmic side; that stretch reads AGELKKPSKTIPR. The helical transmembrane segment at 243 to 263 threads the bilayer; sequence CIFTGLPLVTVVYLLANISYL. Residues 264 to 288 are Extracellular-facing; it reads TVLTPQEMLSSDAVALTWTDRVIPQ. Residues 289-309 traverse the membrane as a helical segment; sequence FTWTVPFAISASLFINLVINV. At 310–338 the chain is on the cytoplasmic side; the sequence is LETSRVLYIASENGQLPLLFCALNVHSSP. Residues 339-359 form a helical membrane-spanning segment; that stretch reads FIAVLLIISMASILIVLTNLI. Asp360 is a topological domain (extracellular). A helical transmembrane segment spans residues 361 to 381; the sequence is LINYLYFVVSIWTALSIIGIL. Residues 382–395 lie on the Cytoplasmic side of the membrane; sequence KLRYQEPNLHRPYK. A helical membrane pass occupies residues 396–416; the sequence is VFLPFTFIALGITLSLVLIPL. The Extracellular segment spans residues 417–423; it reads VKSPKLH. The chain crosses the membrane as a helical span at residues 424 to 444; the sequence is YIYVFLFLLSGLVFYVPLIHF. At 445–478 the chain is on the cytoplasmic side; that stretch reads KVKFVWFQKLTCYLQLLFNICIPDVSDDHIHEES.

It belongs to the amino acid-polyamine-organocation (APC) superfamily. In terms of assembly, disulfide-linked heterodimer composed of the catalytic light subunit SLC7A13 and the heavy subunit SLC3A1. As to expression, expressed in renal tubules in the outer stripe of the outer medulla and medullary ray (at protein level). Detected in male but not in female kidney.

Its subcellular location is the apical cell membrane. The catalysed reaction is L-cystine(out) + L-aspartate(in) = L-cystine(in) + L-aspartate(out). The enzyme catalyses L-cystine(out) = L-cystine(in). It carries out the reaction L-aspartate(in) + L-glutamate(out) = L-aspartate(out) + L-glutamate(in). It catalyses the reaction L-aspartate(in) + L-glutamine(out) = L-aspartate(out) + L-glutamine(in). The catalysed reaction is L-aspartate(in) + L-methionine(out) = L-aspartate(out) + L-methionine(in). The enzyme catalyses L-leucine(out) + L-aspartate(in) = L-leucine(in) + L-aspartate(out). It carries out the reaction L-valine(out) + L-aspartate(in) = L-valine(in) + L-aspartate(out). It catalyses the reaction L-aspartate(in) + L-phenylalanine(out) = L-aspartate(out) + L-phenylalanine(in). The catalysed reaction is L-tyrosine(out) + L-aspartate(in) = L-tyrosine(in) + L-aspartate(out). The enzyme catalyses L-tryptophan(out) + L-aspartate(in) = L-tryptophan(in) + L-aspartate(out). In terms of biological role, associates with SLC3A1/rBAT to form a functional heterodimeric complex that transports anionic and neutral amino acids across the apical plasma membrane of renal epithelium. Preferentially mediates exchange transport, but can also operate via facilitated diffusion. May act as a major transporter for L-cystine in late proximal tubules, ensuring its reabsorption from the luminal fluid in exchange for cytosolic L-glutamate or L-aspartate. The chain is Solute carrier family 7 member 13 from Mus musculus (Mouse).